The sequence spans 271 residues: Cyclase-like protein 3 (271 aa).

The N-terminal stretch at 1–21 (MYHLLIIITTLSFSSINITFA) is a signal peptide.

This sequence belongs to the Cyclase 1 superfamily.

The protein localises to the secreted. The protein resides in the extracellular space. Its subcellular location is the extracellular matrix. The polypeptide is Cyclase-like protein 3 (Arabidopsis thaliana (Mouse-ear cress)).